The sequence spans 559 residues: Estrogen receptor beta (559 aa).

The modulating stretch occupies residues 1-155; the sequence is MAVACSPEKD…SSGGKADLHF (155 aa). The segment at 128–148 is disordered; that stretch reads TSSKSARRRSQENEEGEVSSG. 2 consecutive NR C4-type zinc fingers follow at residues 156–176 and 192–216; these read CAVC…CEGC and CPAT…LHKC. Positions 156-221 form a DNA-binding region, nuclear receptor; it reads CAVCHDYASG…RLHKCYNVGM (66 aa). Residues 243–254 show a composition bias toward polar residues; the sequence is RLSSQGRTSGPS. Residues 243–269 are disordered; that stretch reads RLSSQGRTSGPSVLNGPAVGPLNTPQP. The 237-residue stretch at 273–509 folds into the NR LBD domain; sequence TSKQLIERIM…DLLLEMLDAH (237 aa). The tract at residues 514–559 is disordered; sequence SRLPRRSPQQETVEQCDAPARPHSPGTSGPTNTWTPSCTGGRGEPQ. Polar residues predominate over residues 538-551; that stretch reads PGTSGPTNTWTPSC.

The protein belongs to the nuclear hormone receptor family. NR3 subfamily. Binds DNA as a homodimer. Can form a heterodimer with ER-alpha.

It localises to the nucleus. Functionally, binds estrogens with an affinity similar to that of ER-alpha, and activates expression of reporter genes containing estrogen response elements (ERE) in an estrogen-dependent manner. The polypeptide is Estrogen receptor beta (esr2) (Sparus aurata (Gilthead sea bream)).